We begin with the raw amino-acid sequence, 133 residues long: Helix-loop-helix protein 1 (133 aa).

Residues 1-78 form a disordered region; sequence MMLNSDTMEL…RRRATAKYRT (78 aa). A compositionally biased stretch (gly residues) spans 25–39; sequence DCGGGPGPDGAGSGD. A compositionally biased stretch (basic and acidic residues) spans 52-65; the sequence is ESGRKDLQHLSREE. Over residues 66–78 the composition is skewed to basic residues; the sequence is RRRRRRATAKYRT. In terms of domain architecture, bHLH spans 75–127; that stretch reads KYRTAHATRERIRVEAFNLAFAELRKLLPTLPPDKKLSKIEILRLAICYISYL.

As to quaternary structure, efficient DNA binding requires dimerization with another bHLH protein.

The protein localises to the nucleus. Its function is as follows. May serve as DNA-binding protein and may be involved in the control of cell-type determination, possibly within the developing nervous system. This is Helix-loop-helix protein 1 (Nhlh1) from Mus musculus (Mouse).